A 298-amino-acid chain; its full sequence is Deleted in azoospermia-like (298 aa).

Residues 1 to 27 (MSATTSEAPNSAVSREASTQSSSATTS) are disordered. The span at 11 to 27 (SAVSREASTQSSSATTS) shows a compositional bias: low complexity. An RRM domain is found at 40-115 (NTVFVGGIDV…KKLKLGPAIR (76 aa)). The segment at 80-132 (KGYGFVSFYNDVDVQKIVESQINFHGKKLKLGPAIRKQNLCTYHVQPRPLIFN) is homodimerization. In terms of domain architecture, DAZ spans 167-190 (AYPPYPSSPVQVITGYQLPVYNYQ). At tyrosine 276 the chain carries Phosphotyrosine.

Belongs to the RRM DAZ family. In terms of assembly, homodimer and heterodimer. Forms a heterodimer with DAZ. Interacts with BOLL, DAZAP1 and DAZAP2. Interacts with PUM2. Multiple DAZL RRMs can bind to a single RNA containing multiple GUU triplets. Expressed predominantly in testis with lower levels in ovary. In testis, it is expressed in pachytene spermatocytes and at lower level in type-B spermatogonia, preleptotene and zygotene spermatocytes. In ovary, it is expressed in maturing follicles. In embryonic and prepuberal ovary, it is expressed in the oocyte and follicular cells.

The protein resides in the cytoplasm. In terms of biological role, RNA-binding protein, which is essential for gametogenesis in both males and females. Plays a central role during spermatogenesis. Acts by binding to the 3'-UTR of mRNA, specifically recognizing GUU triplets, and thereby regulating the translation of key transcripts. The polypeptide is Deleted in azoospermia-like (Dazl) (Mus musculus (Mouse)).